A 148-amino-acid chain; its full sequence is Small ribosomal subunit protein uS7m (148 aa).

The protein belongs to the universal ribosomal protein uS7 family. As to quaternary structure, part of the small ribosomal subunit.

It localises to the mitochondrion. In terms of biological role, one of the primary rRNA binding proteins, it binds directly to 18S rRNA where it nucleates assembly of the head domain of the small subunit. The polypeptide is Small ribosomal subunit protein uS7m (RPS7) (Triticum aestivum (Wheat)).